The chain runs to 351 residues: Muscleblind-like protein 2a (351 aa).

C3H1-type zinc fingers lie at residues 13-41 (WLTL…HPPK), 47-73 (NGRV…HPPA), 177-205 (TDKL…HPSD), and 213-239 (DNTV…HPPA).

Belongs to the muscleblind family. As to expression, expressed in fast and slow myotomal muscle, heart, liver, skin, brain and testis.

It is found in the nucleus. It localises to the cytoplasm. Involved in pre-mRNA alternative splicing regulation. RNA-binding protein that binds to 5'ACACCC-3' core sequence. The chain is Muscleblind-like protein 2a (mbnl2a) from Takifugu rubripes (Japanese pufferfish).